We begin with the raw amino-acid sequence, 361 residues long: Phospho-N-acetylmuramoyl-pentapeptide-transferase (361 aa).

A run of 10 helical transmembrane segments spans residues 28–48 (LAVLVTLSLSFLIGPRLIKFL), 74–94 (TMGGIMIILSSCFSTLLLADL), 99–119 (IWITLFGFVSFSIIGFLDDYA), 135–155 (LLLQGIISLIVCILLEYTIDS), 167–187 (SLSMDLGYLYIFFAIFVIVGA), 203–223 (VPIALTAGSFALISYLVGNLI), 236–256 (TGELTIFCASIVGSCLGFLWF), 263–283 (VFMGDTGSLSLGGVLGIISVI), 288–308 (IVLGIVGGLFVIETISVIMQV), and 338–358 (KVVIRFWIISLIFVLIGLSSL).

Belongs to the glycosyltransferase 4 family. MraY subfamily. Mg(2+) serves as cofactor.

The protein resides in the cell inner membrane. The catalysed reaction is UDP-N-acetyl-alpha-D-muramoyl-L-alanyl-gamma-D-glutamyl-meso-2,6-diaminopimeloyl-D-alanyl-D-alanine + di-trans,octa-cis-undecaprenyl phosphate = di-trans,octa-cis-undecaprenyl diphospho-N-acetyl-alpha-D-muramoyl-L-alanyl-D-glutamyl-meso-2,6-diaminopimeloyl-D-alanyl-D-alanine + UMP. It functions in the pathway cell wall biogenesis; peptidoglycan biosynthesis. Catalyzes the initial step of the lipid cycle reactions in the biosynthesis of the cell wall peptidoglycan: transfers peptidoglycan precursor phospho-MurNAc-pentapeptide from UDP-MurNAc-pentapeptide onto the lipid carrier undecaprenyl phosphate, yielding undecaprenyl-pyrophosphoryl-MurNAc-pentapeptide, known as lipid I. In Rickettsia bellii (strain OSU 85-389), this protein is Phospho-N-acetylmuramoyl-pentapeptide-transferase.